Reading from the N-terminus, the 614-residue chain is Autophagy-related protein 22-1 (614 aa).

The interval 1–29 is disordered; sequence MQNCTNSPEDQAASVCPPPPQFPGDDTRP. A glycan (N-linked (GlcNAc...) asparagine) is linked at Asn-3. The next 4 membrane-spanning stretches (helical) occupy residues 41 to 61, 126 to 146, 160 to 180, and 185 to 205; these read YGWAAEVFTVCAMGSFLPITL, TASFAMYTFSLSVFIQAILII, MLLVIFALIGSVSTMLFLAVV, and LLGGLFAIISNTCFGASFVLL. Positions 229–254 are disordered; that stretch reads PTGTSHDSTSTADGPGQTDGTETTSL. Polar residues predominate over residues 230–254; that stretch reads TGTSHDSTSTADGPGQTDGTETTSL. 8 helical membrane-spanning segments follow: residues 291–311, 322–342, 383–403, 417–437, 452–472, 486–506, 523–545, and 554–574; these read GIGIGYIGAVILQAICILVVV, LVLFLIGLWWFTFTIPAAMWL, ILLFLAAWFLLSDGIATVSGT, AALGLINVIAMIAGVFGAFSW, IVACIILFELVPLYGLLGFIP, WEMYPLGVIYGLVMGGLSSYC, YALYAITDKGSSVFGPAIVGIIT, and AFVFLAVLILLPLPLMLLVDV.

Belongs to the ATG22 family.

The protein localises to the vacuole membrane. Vacuolar effluxer which mediate the efflux of amino acids resulting from autophagic degradation. The release of autophagic amino acids allows the maintenance of protein synthesis and viability during nitrogen starvation. The sequence is that of Autophagy-related protein 22-1 (atg22-1) from Aspergillus niger (strain ATCC MYA-4892 / CBS 513.88 / FGSC A1513).